Here is a 195-residue protein sequence, read N- to C-terminus: dTTP/UTP pyrophosphatase (195 aa).

Asp77 functions as the Proton acceptor in the catalytic mechanism.

It belongs to the Maf family. YhdE subfamily. It depends on a divalent metal cation as a cofactor.

It is found in the cytoplasm. The enzyme catalyses dTTP + H2O = dTMP + diphosphate + H(+). The catalysed reaction is UTP + H2O = UMP + diphosphate + H(+). Its function is as follows. Nucleoside triphosphate pyrophosphatase that hydrolyzes dTTP and UTP. May have a dual role in cell division arrest and in preventing the incorporation of modified nucleotides into cellular nucleic acids. This is dTTP/UTP pyrophosphatase from Flavobacterium psychrophilum (strain ATCC 49511 / DSM 21280 / CIP 103535 / JIP02/86).